Here is a 172-residue protein sequence, read N- to C-terminus: Adenine phosphoribosyltransferase (172 aa).

Belongs to the purine/pyrimidine phosphoribosyltransferase family. In terms of assembly, homodimer.

It is found in the cytoplasm. It catalyses the reaction AMP + diphosphate = 5-phospho-alpha-D-ribose 1-diphosphate + adenine. The protein operates within purine metabolism; AMP biosynthesis via salvage pathway; AMP from adenine: step 1/1. Catalyzes a salvage reaction resulting in the formation of AMP, that is energically less costly than de novo synthesis. This Synechococcus sp. (strain CC9605) protein is Adenine phosphoribosyltransferase.